We begin with the raw amino-acid sequence, 197 residues long: Probable GTP-binding protein EngB (197 aa).

One can recognise an EngB-type G domain in the interval 25–197; that stretch reads SAPEIAFAGR…VRDEFFKFTR (173 aa). GTP contacts are provided by residues 33-40, 60-64, 79-82, 146-149, and 177-179; these read GRSNVGKS, GCTRQ, DLPG, TKID, and MSI. Positions 40 and 62 each coordinate Mg(2+).

The protein belongs to the TRAFAC class TrmE-Era-EngA-EngB-Septin-like GTPase superfamily. EngB GTPase family. Mg(2+) is required as a cofactor.

Its function is as follows. Necessary for normal cell division and for the maintenance of normal septation. The protein is Probable GTP-binding protein EngB of Wolbachia sp. subsp. Drosophila simulans (strain wRi).